The chain runs to 249 residues: MAGHSHWAQIKHKKAKVDAQRGKLFSKLIREIIVATRLGGPNPEFNPRLRTAIEQAKKANMPWENIERAIKKGAGELEGEQFEEVIYEGYAPGGVAVMVLATTDNRNRTTSEVRHVFTKHGGNLGASGCVSYLFERKGYIEVPAKEVSEEELLEKAIEVGAEDVQPGEEVHIIYTVPEELYEVKENLEKLGVPIEKAQITWKPISTVQINDEETAQKVIKLLNALEELDDVQQVIANFEIPEEILQKVG.

Belongs to the TACO1 family.

It is found in the cytoplasm. The protein is Probable transcriptional regulatory protein aq_1575 of Aquifex aeolicus (strain VF5).